The following is a 126-amino-acid chain: MADLAKLVDDLSSLTVLEAAELAKMLEEKWGVSAAAAVAVAAGPAAGGAAAPAAEEQTEFTVVLAAAGDKKIEVIKEVRAITGLGLKEAKDLVEGAPKPVKEGVSKDDAAKLKAQLEKAGAKVELK.

It belongs to the bacterial ribosomal protein bL12 family. In terms of assembly, homodimer. Part of the ribosomal stalk of the 50S ribosomal subunit. Forms a multimeric L10(L12)X complex, where L10 forms an elongated spine to which 2 to 4 L12 dimers bind in a sequential fashion. Binds GTP-bound translation factors.

In terms of biological role, forms part of the ribosomal stalk which helps the ribosome interact with GTP-bound translation factors. Is thus essential for accurate translation. The protein is Large ribosomal subunit protein bL12 of Methylobacterium sp. (strain 4-46).